A 452-amino-acid polypeptide reads, in one-letter code: Mitochondrial distribution and morphology protein 34 (452 aa).

The SMP-LTD domain maps to 1-196 (MSFRVKGWSD…LPSIIYKMSR (196 aa)).

It belongs to the MDM34 family. As to quaternary structure, component of the ER-mitochondria encounter structure (ERMES) or MDM complex, composed of mmm1, mdm10, mdm12 and mdm34.

It is found in the mitochondrion outer membrane. In terms of biological role, component of the ERMES/MDM complex, which serves as a molecular tether to connect the endoplasmic reticulum (ER) and mitochondria. Components of this complex are involved in the control of mitochondrial shape and protein biogenesis, and function in nonvesicular lipid trafficking between the ER and mitochondria. Mdm34 is required for the interaction of the ER-resident membrane protein mmm1 and the outer mitochondrial membrane-resident beta-barrel protein mdm10. This Schizosaccharomyces pombe (strain 972 / ATCC 24843) (Fission yeast) protein is Mitochondrial distribution and morphology protein 34.